Here is a 904-residue protein sequence, read N- to C-terminus: Protein translocase subunit SecA (904 aa).

ATP is bound by residues glutamine 89, 107–111 (GEGKT), and aspartate 496. The tract at residues 870-904 (GGFQELSSGTPSPTVTVTTSSGGGTERKTSRRRKR) is disordered. A compositionally biased stretch (low complexity) spans 876–889 (SSGTPSPTVTVTTS).

Belongs to the SecA family. In terms of assembly, monomer and homodimer. Part of the essential Sec protein translocation apparatus which comprises SecA, SecYEG and auxiliary proteins SecDF. Other proteins may also be involved.

It localises to the cell inner membrane. Its subcellular location is the cytoplasm. The enzyme catalyses ATP + H2O + cellular proteinSide 1 = ADP + phosphate + cellular proteinSide 2.. Its function is as follows. Part of the Sec protein translocase complex. Interacts with the SecYEG preprotein conducting channel. Has a central role in coupling the hydrolysis of ATP to the transfer of proteins into and across the cell membrane, serving as an ATP-driven molecular motor driving the stepwise translocation of polypeptide chains across the membrane. This Leptospira borgpetersenii serovar Hardjo-bovis (strain JB197) protein is Protein translocase subunit SecA.